A 504-amino-acid chain; its full sequence is Galactose/methyl galactoside import ATP-binding protein MglA (504 aa).

ABC transporter domains are found at residues 8 to 247 and 258 to 504; these read LEMN…VGRD and TPGE…TRFI. 40 to 47 contacts ATP; the sequence is GENGAGKS.

This sequence belongs to the ABC transporter superfamily. Galactose/methyl galactoside importer (TC 3.A.1.2.3) family. As to quaternary structure, the complex is composed of one ATP-binding protein (MglA), two transmembrane proteins (MglC) and a solute-binding protein (MglB).

The protein resides in the cell membrane. It carries out the reaction D-galactose(out) + ATP + H2O = D-galactose(in) + ADP + phosphate + H(+). It catalyses the reaction methyl beta-D-galactoside(out) + ATP + H2O = methyl beta-D-galactoside(in) + ADP + phosphate + H(+). Part of the ABC transporter complex MglABC involved in galactose/methyl galactoside import. Responsible for energy coupling to the transport system. The protein is Galactose/methyl galactoside import ATP-binding protein MglA of Clostridium tetani (strain Massachusetts / E88).